A 638-amino-acid chain; its full sequence is Zona pellucida sperm-binding protein 1 (638 aa).

Positions 1–25 (MAGGSATTWGYPVALLLLVATLGLG) are cleaved as a signal peptide. The Extracellular segment spans residues 26–601 (RWLQPDPGLP…DSNGNSSLRP (576 aa)). N-linked (GlcNAc...) asparagine glycosylation occurs at asparagine 76. Residues 165–175 (LPTSGHTSQGS) show a composition bias toward polar residues. The interval 165–208 (LPTSGHTSQGSGHAFPSPLDPGHSSVHPTPALPSPGPGPTLATL) is disordered. The 41-residue stretch at 234–274 (EQCQVASGHLPCIVRRTSKEACQQAGCCYDNTREVPCYYGN) folds into the P-type domain. 3 disulfides stabilise this stretch: cysteine 236/cysteine 261, cysteine 245/cysteine 260, and cysteine 255/cysteine 270. The ZP domain maps to 279 to 553 (QCFRDGYFVL…TACSTGTTRQ (275 aa)). Residue asparagine 379 is glycosylated (N-linked (GlcNAc...) asparagine). Residues cysteine 457 and cysteine 478 are joined by a disulfide bond. Residues 549–594 (GTTRQRRSSGHRNDTARPQDIVSSPGPVGFEDSYGQEPTLGPTDSN) are disordered. A propeptide spans 554-638 (RRSSGHRNDT…AQKLWESNRQ (85 aa)) (removed in mature form). Residues asparagine 561 and asparagine 596 are each glycosylated (N-linked (GlcNAc...) asparagine). A helical transmembrane segment spans residues 602–622 (LLWAVLLLPAVALVLGFGVFV). Residues 623–638 (GLSQTWAQKLWESNRQ) are Cytoplasmic-facing.

The protein belongs to the ZP domain family. ZPB subfamily. In terms of assembly, polymers of ZP2 and ZP3 organized into long filaments cross-linked by ZP1 homodimers. Interacts with ZP3. In terms of processing, proteolytically cleaved before the transmembrane segment to yield the secreted ectodomain incorporated in the zona pellucida. O-glycosylated. In terms of tissue distribution, expressed in oocytes (at protein level).

The protein resides in the zona pellucida. It localises to the cell membrane. Its function is as follows. Component of the zona pellucida, an extracellular matrix surrounding oocytes which mediates sperm binding, induction of the acrosome reaction and prevents post-fertilization polyspermy. The zona pellucida is composed of 3 to 4 glycoproteins, ZP1, ZP2, ZP3, and ZP4. ZP1 ensures the structural integrity of the zona pellucida. The sequence is that of Zona pellucida sperm-binding protein 1 (ZP1) from Homo sapiens (Human).